The following is a 473-amino-acid chain: GTPase Der (473 aa).

2 EngA-type G domains span residues 3-167 (FTVA…GKDR) and 203-378 (LRVA…RVWN). GTP-binding positions include 9 to 16 (GRPNVGKS), 56 to 60 (DTAGL), 119 to 122 (NKSE), 209 to 216 (GRPNAGKS), 256 to 260 (DTAGM), and 321 to 324 (NKWD). The region spanning 379–463 (KRISTARLNR…PIRIHFRSAE (85 aa)) is the KH-like domain.

This sequence belongs to the TRAFAC class TrmE-Era-EngA-EngB-Septin-like GTPase superfamily. EngA (Der) GTPase family. As to quaternary structure, associates with the 50S ribosomal subunit.

In terms of biological role, GTPase that plays an essential role in the late steps of ribosome biogenesis. The chain is GTPase Der from Rhizobium etli (strain CIAT 652).